Consider the following 137-residue polypeptide: Large ribosomal subunit protein uL16 (137 aa).

This sequence belongs to the universal ribosomal protein uL16 family. In terms of assembly, part of the 50S ribosomal subunit.

Its function is as follows. Binds 23S rRNA and is also seen to make contacts with the A and possibly P site tRNAs. The sequence is that of Large ribosomal subunit protein uL16 from Marinomonas sp. (strain MWYL1).